Reading from the N-terminus, the 605-residue chain is Adenine deaminase (605 aa).

The protein belongs to the metallo-dependent hydrolases superfamily. Adenine deaminase family. Requires Mn(2+) as cofactor.

The enzyme catalyses adenine + H2O + H(+) = hypoxanthine + NH4(+). The protein is Adenine deaminase of Mesorhizobium japonicum (strain LMG 29417 / CECT 9101 / MAFF 303099) (Mesorhizobium loti (strain MAFF 303099)).